The primary structure comprises 1263 residues: DNA-directed RNA polymerase subunit beta (1263 aa).

Belongs to the RNA polymerase beta chain family. In terms of assembly, the RNAP catalytic core consists of 2 alpha, 1 beta, 1 beta' and 1 omega subunit. When a sigma factor is associated with the core the holoenzyme is formed, which can initiate transcription.

The catalysed reaction is RNA(n) + a ribonucleoside 5'-triphosphate = RNA(n+1) + diphosphate. In terms of biological role, DNA-dependent RNA polymerase catalyzes the transcription of DNA into RNA using the four ribonucleoside triphosphates as substrates. This Thermotoga petrophila (strain ATCC BAA-488 / DSM 13995 / JCM 10881 / RKU-1) protein is DNA-directed RNA polymerase subunit beta.